The chain runs to 404 residues: MQVSIACTEQNLRSRSSEDRLCGPRPGPGGGNGGPVGGGHGNPPGGGGLGSKSRTAVVPRPPAPAGALRESTGRGTGMKYRNLGKSGLRVSCLGLGTWVTFGSQISDETAEDLLTVAYEHGVNLFDTAEVYAAGKAERTLGNILKSKGWRRSSYVITTKIFWGGQAETERGLSRKHIIEGLQGSLDRLQLEYVDIVFANRSDPSSPMEEIVRAMTYVINQGLALYWGTSRWSAAEIMEAYSMARQFNLIPPVCEQAENHFFQREKVEMQLPELYHKIGVGSVTWSPLACSLITSKYDGQVPDACKATVKGYQWLKEKVQSEDGKKQQARVTDLLPIAHQLGCTVAQLAIAWCLRSEGVSSVLLGVSSAEQLMEHLGSLQVLGQLTPQTVMEIDALLGNKSHSKK.

The segment covering 1–14 (MQVSIACTEQNLRS) has biased composition (polar residues). A disordered region spans residues 1 to 78 (MQVSIACTEQ…RESTGRGTGM (78 aa)). Positions 28-50 (PGGGNGGPVGGGHGNPPGGGGLG) are enriched in gly residues. The NADP(+) site is built by T97, W98, Q104, and D126. Catalysis depends on Y131, which acts as the Proton donor/acceptor. Residues N199, S229, R230, Q255, W284, S285, P286, L287, A288, C289, K295, K305, G364, S366, Q370, and E373 each contribute to the NADP(+) site.

This sequence belongs to the shaker potassium channel beta subunit family. Forms heteromultimeric complex with alpha subunits. Interacts with KCNA5 and KCNB2. As to expression, predominantly expressed in brain. Strongest expression in olfactory bulb and thalamic nuclei. Not detected in heart, spleen, lung, liver, skeletal muscle, kidney and testis.

It is found in the cytoplasm. In terms of biological role, regulatory subunit of the voltage-gated potassium (Kv) channels composed of pore-forming and potassium-conducting alpha subunits and of regulatory beta subunits. The beta-3/KCNAB3 subunit may mediate closure of potassium channels. Inactivates Kv1.4/KCNA4 alpha subunit-containing Kv channel current but not Kv1.1/KCNA1 or Kv1.5/KCNA5 channels. May display nicotinamide adenine dinucleotide phosphate (NADPH)-dependent aldoketoreductase activity. The binding of oxidized and reduced NADP(H) cofactors may be required for the regulation of potassium channel activity. The polypeptide is Voltage-gated potassium channel subunit beta-3 (Rattus norvegicus (Rat)).